Here is a 335-residue protein sequence, read N- to C-terminus: MTAPSKPVLVADIGGTNARFALADIDASVPLLDDTCREFAVVEFGSLGEAARYYLDQIGVQATKGVFAVAGRVDGDEARITNHPWVISRSRTATMLGFSTLHLINDFAAQAMAISLLRPQDVVQVGGASWRPAPIELPRNYGVIGPGTGLGVGGLIIRNGRCFPLETEGGHVSFPPGTPEEIRVLEILSEQFGRVSNERLICGPGLVNIHRALSEIAGIDPGPLEPKDITARAAAGDPRASRTIDLFCAIFGAIAGDMVLMQGAWDGVFLTGGLVPKVLDSLQHSGFRQRFEHKGRFSAIMSRVPSLAVMHPHAGLLGAAAYAVDAERALPGEQR.

Residue 11–16 (ADIGGT) coordinates ATP.

It belongs to the bacterial glucokinase family.

It is found in the cytoplasm. It carries out the reaction D-glucose + ATP = D-glucose 6-phosphate + ADP + H(+). This Xanthomonas campestris pv. campestris (strain 8004) protein is Glucokinase.